A 135-amino-acid polypeptide reads, in one-letter code: Large ribosomal subunit protein eL27 (135 aa).

Belongs to the eukaryotic ribosomal protein eL27 family.

This chain is Large ribosomal subunit protein eL27 (RPL27), found in Pisum sativum (Garden pea).